Reading from the N-terminus, the 185-residue chain is Ribosome-recycling factor (185 aa).

The protein belongs to the RRF family.

It localises to the cytoplasm. Its function is as follows. Responsible for the release of ribosomes from messenger RNA at the termination of protein biosynthesis. May increase the efficiency of translation by recycling ribosomes from one round of translation to another. In Coxiella burnetii (strain CbuK_Q154) (Coxiella burnetii (strain Q154)), this protein is Ribosome-recycling factor.